A 233-amino-acid polypeptide reads, in one-letter code: Large ribosomal subunit protein uL1 (233 aa).

The protein belongs to the universal ribosomal protein uL1 family. In terms of assembly, part of the 50S ribosomal subunit.

Binds directly to 23S rRNA. The L1 stalk is quite mobile in the ribosome, and is involved in E site tRNA release. Functionally, protein L1 is also a translational repressor protein, it controls the translation of the L11 operon by binding to its mRNA. This is Large ribosomal subunit protein uL1 from Polynucleobacter asymbioticus (strain DSM 18221 / CIP 109841 / QLW-P1DMWA-1) (Polynucleobacter necessarius subsp. asymbioticus).